Here is a 365-residue protein sequence, read N- to C-terminus: Probable dual-specificity RNA methyltransferase RlmN (365 aa).

Glu108 (proton acceptor) is an active-site residue. Residues His114 to Asp347 form the Radical SAM core domain. A disulfide bond links Cys121 and Cys352. [4Fe-4S] cluster is bound by residues Cys128, Cys132, and Cys135. S-adenosyl-L-methionine-binding positions include Gly178–Glu179, Ser210, Ser233–His235, and Asn309. Cys352 serves as the catalytic S-methylcysteine intermediate.

It belongs to the radical SAM superfamily. RlmN family. It depends on [4Fe-4S] cluster as a cofactor.

It is found in the cytoplasm. The enzyme catalyses adenosine(2503) in 23S rRNA + 2 reduced [2Fe-2S]-[ferredoxin] + 2 S-adenosyl-L-methionine = 2-methyladenosine(2503) in 23S rRNA + 5'-deoxyadenosine + L-methionine + 2 oxidized [2Fe-2S]-[ferredoxin] + S-adenosyl-L-homocysteine. It carries out the reaction adenosine(37) in tRNA + 2 reduced [2Fe-2S]-[ferredoxin] + 2 S-adenosyl-L-methionine = 2-methyladenosine(37) in tRNA + 5'-deoxyadenosine + L-methionine + 2 oxidized [2Fe-2S]-[ferredoxin] + S-adenosyl-L-homocysteine. Specifically methylates position 2 of adenine 2503 in 23S rRNA and position 2 of adenine 37 in tRNAs. In Geobacillus kaustophilus (strain HTA426), this protein is Probable dual-specificity RNA methyltransferase RlmN.